A 325-amino-acid chain; its full sequence is GMP reductase (325 aa).

The active-site Thioimidate intermediate is C173. Residue 202-225 (IIADGGIRDHGDIAKSVRFGASMV) coordinates NADP(+).

This sequence belongs to the IMPDH/GMPR family. GuaC type 2 subfamily.

It carries out the reaction IMP + NH4(+) + NADP(+) = GMP + NADPH + 2 H(+). Catalyzes the irreversible NADPH-dependent deamination of GMP to IMP. It functions in the conversion of nucleobase, nucleoside and nucleotide derivatives of G to A nucleotides, and in maintaining the intracellular balance of A and G nucleotides. The chain is GMP reductase from Variovorax paradoxus (strain S110).